The primary structure comprises 432 residues: Bifunctional protein GlmU (432 aa).

The segment at 1–224 (MSEISVIILA…EENFMGINDK (224 aa)) is pyrophosphorylase. UDP-N-acetyl-alpha-D-glucosamine contacts are provided by residues 9–12 (LAAG), Lys23, and 82–83 (GT). Asp103 lines the Mg(2+) pocket. UDP-N-acetyl-alpha-D-glucosamine contacts are provided by Gly136, Glu150, Asn165, and Asn222. Position 222 (Asn222) interacts with Mg(2+). The tract at residues 225 to 245 (FALSKAETIIQNEIKENLMKN) is linker. An N-acetyltransferase region spans residues 246–432 (GVLMRLPESI…FFAKFFKEIK (187 aa)). Positions 309 and 326 each coordinate UDP-N-acetyl-alpha-D-glucosamine. The Proton acceptor role is filled by His337. UDP-N-acetyl-alpha-D-glucosamine-binding residues include Tyr340 and Asn351. Residues 360 to 361 (NY), Ser379, Ala397, and Arg414 each bind acetyl-CoA.

The protein in the N-terminal section; belongs to the N-acetylglucosamine-1-phosphate uridyltransferase family. This sequence in the C-terminal section; belongs to the transferase hexapeptide repeat family. In terms of assembly, homotrimer. The cofactor is Mg(2+).

The protein localises to the cytoplasm. The catalysed reaction is alpha-D-glucosamine 1-phosphate + acetyl-CoA = N-acetyl-alpha-D-glucosamine 1-phosphate + CoA + H(+). The enzyme catalyses N-acetyl-alpha-D-glucosamine 1-phosphate + UTP + H(+) = UDP-N-acetyl-alpha-D-glucosamine + diphosphate. The protein operates within nucleotide-sugar biosynthesis; UDP-N-acetyl-alpha-D-glucosamine biosynthesis; N-acetyl-alpha-D-glucosamine 1-phosphate from alpha-D-glucosamine 6-phosphate (route II): step 2/2. It participates in nucleotide-sugar biosynthesis; UDP-N-acetyl-alpha-D-glucosamine biosynthesis; UDP-N-acetyl-alpha-D-glucosamine from N-acetyl-alpha-D-glucosamine 1-phosphate: step 1/1. Its pathway is bacterial outer membrane biogenesis; LPS lipid A biosynthesis. In terms of biological role, catalyzes the last two sequential reactions in the de novo biosynthetic pathway for UDP-N-acetylglucosamine (UDP-GlcNAc). The C-terminal domain catalyzes the transfer of acetyl group from acetyl coenzyme A to glucosamine-1-phosphate (GlcN-1-P) to produce N-acetylglucosamine-1-phosphate (GlcNAc-1-P), which is converted into UDP-GlcNAc by the transfer of uridine 5-monophosphate (from uridine 5-triphosphate), a reaction catalyzed by the N-terminal domain. The polypeptide is Bifunctional protein GlmU (Campylobacter hominis (strain ATCC BAA-381 / DSM 21671 / CCUG 45161 / LMG 19568 / NCTC 13146 / CH001A)).